Here is a 214-residue protein sequence, read N- to C-terminus: ATP phosphoribosyltransferase (214 aa).

The protein belongs to the ATP phosphoribosyltransferase family. Short subfamily. Heteromultimer composed of HisG and HisZ subunits.

It is found in the cytoplasm. The catalysed reaction is 1-(5-phospho-beta-D-ribosyl)-ATP + diphosphate = 5-phospho-alpha-D-ribose 1-diphosphate + ATP. It functions in the pathway amino-acid biosynthesis; L-histidine biosynthesis; L-histidine from 5-phospho-alpha-D-ribose 1-diphosphate: step 1/9. Catalyzes the condensation of ATP and 5-phosphoribose 1-diphosphate to form N'-(5'-phosphoribosyl)-ATP (PR-ATP). Has a crucial role in the pathway because the rate of histidine biosynthesis seems to be controlled primarily by regulation of HisG enzymatic activity. The polypeptide is ATP phosphoribosyltransferase (Marinobacter nauticus (strain ATCC 700491 / DSM 11845 / VT8) (Marinobacter aquaeolei)).